An 809-amino-acid polypeptide reads, in one-letter code: Plasminogen (809 aa).

The N-terminal stretch at 1 to 19 is a signal peptide; sequence MDHKEVVLLLLLFLKSGLG. A PAN domain is found at 20–98; sequence DSLDDYVNTQ…RDVVLFEKRI (79 aa). 24 cysteine pairs are disulfide-bonded: Cys-49/Cys-73, Cys-53/Cys-61, Cys-103/Cys-181, Cys-124/Cys-164, Cys-152/Cys-176, Cys-185/Cys-262, Cys-188/Cys-316, Cys-206/Cys-245, Cys-234/Cys-257, Cys-275/Cys-352, Cys-296/Cys-335, Cys-324/Cys-347, Cys-377/Cys-454, Cys-398/Cys-437, Cys-426/Cys-449, Cys-480/Cys-559, Cys-501/Cys-542, Cys-530/Cys-554, Cys-566/Cys-684, Cys-576/Cys-584, Cys-606/Cys-622, Cys-698/Cys-765, Cys-728/Cys-744, and Cys-755/Cys-783. Kringle domains lie at 103–181 and 185–262; these read CKTG…IPEC and CMHC…IPRC. Thr-268 is a glycosylation site (O-linked (GalNAc...) threonine). Kringle domains are found at residues 275-352, 377-454, and 480-559; these read CLKG…IPSC, CYRG…LKKC, and CMFG…VPQC. An N-linked (GlcNAc...) asparagine glycan is attached at Asn-308. The Peptidase S1 domain maps to 580–807; sequence VVGGCVSIPH…FVTWIEEIMR (228 aa). Ser-596 carries the post-translational modification Phosphoserine. Catalysis depends on charge relay system residues His-621 and Asp-664. Ser-759 (charge relay system) is an active-site residue.

It belongs to the peptidase S1 family. Plasminogen subfamily. Interacts with CSPG4 and AMOT. Interacts (via the Kringle domains) with HRG; the interaction tethers PLG to the cell surface and enhances its activation. Interacts (via Kringle 4 domain) with ADA; the interaction stimulates PLG activation when in complex with DPP4. Angiostatin: Interacts with ATP5F1A; the interaction inhibits most of the angiogenic effects of angiostatin. In terms of processing, N-linked glycan contains N-acetyllactosamine, sialic acid and is core fucosylated. O-linked glycans consist of Gal-GalNAc disaccharide which is modified with up to 2 sialic acid residues (microheterogeneity). In the presence of the inhibitor, the activation involves only cleavage after Arg-579, yielding two chains held together by two disulfide bonds. In the absence of the inhibitor, the activation involves additionally the removal of the activation peptide.

It is found in the secreted. The catalysed reaction is Preferential cleavage: Lys-|-Xaa &gt; Arg-|-Xaa, higher selectivity than trypsin. Converts fibrin into soluble products.. Converted into plasmin by plasminogen activators, both plasminogen and its activator being bound to fibrin. Cannot be activated with streptokinase. Plasmin dissolves the fibrin of blood clots and acts as a proteolytic factor in a variety of other processes including embryonic development, tissue remodeling, tumor invasion, and inflammation. In ovulation, weakens the walls of the Graafian follicle. It activates the urokinase-type plasminogen activator, collagenases and several complement zymogens, such as C1, C4 and C5. Cleavage of fibronectin and laminin leads to cell detachment and apoptosis. Also cleaves fibrin, thrombospondin and von Willebrand factor. Its role in tissue remodeling and tumor invasion may be modulated by CSPG4. Binds to cells. This Sus scrofa (Pig) protein is Plasminogen (PLG).